A 270-amino-acid polypeptide reads, in one-letter code: Purine nucleoside phosphorylase BT_4389 (270 aa).

Residues His-79, Cys-124, and His-141 each coordinate Zn(2+).

Belongs to the purine nucleoside phosphorylase YfiH/LACC1 family. As to quaternary structure, homodimer. Cu(2+) serves as cofactor. Requires Zn(2+) as cofactor.

It carries out the reaction adenosine + phosphate = alpha-D-ribose 1-phosphate + adenine. The catalysed reaction is S-methyl-5'-thioadenosine + phosphate = 5-(methylsulfanyl)-alpha-D-ribose 1-phosphate + adenine. It catalyses the reaction inosine + phosphate = alpha-D-ribose 1-phosphate + hypoxanthine. The enzyme catalyses adenosine + H2O + H(+) = inosine + NH4(+). Functionally, purine nucleoside enzyme that catalyzes the phosphorolysis of adenosine and inosine nucleosides, yielding D-ribose 1-phosphate and the respective free bases, adenine and hypoxanthine. Also catalyzes the phosphorolysis of S-methyl-5'-thioadenosine into adenine and S-methyl-5-thio-alpha-D-ribose 1-phosphate. Also has adenosine deaminase activity. The protein is Purine nucleoside phosphorylase BT_4389 of Bacteroides thetaiotaomicron (strain ATCC 29148 / DSM 2079 / JCM 5827 / CCUG 10774 / NCTC 10582 / VPI-5482 / E50).